Here is an 89-residue protein sequence, read N- to C-terminus: Elongation factor 1-beta (89 aa).

The protein belongs to the EF-1-beta/EF-1-delta family.

In terms of biological role, promotes the exchange of GDP for GTP in EF-1-alpha/GDP, thus allowing the regeneration of EF-1-alpha/GTP that could then be used to form the ternary complex EF-1-alpha/GTP/AAtRNA. In Methanococcus maripaludis (strain C5 / ATCC BAA-1333), this protein is Elongation factor 1-beta.